A 366-amino-acid polypeptide reads, in one-letter code: RISC-loading complex subunit TARBP2 (366 aa).

3 sufficient for interaction with PRKRA regions span residues 22 to 105, 152 to 234, and 287 to 366; these read MLAA…EPAL, SPQQ…DARD, and LGAL…AGSK. The 68-residue stretch at 30-97 folds into the DRBM 1 domain; the sequence is TPISLLQEYG…AEVALKHLKG (68 aa). Positions 135–158 are disordered; sequence PSAVPTRSSPMEVQPPVSPQQSEC. The residue at position 152 (Ser152) is a Phosphoserine. DRBM domains lie at 159–227 and 293–361; these read NPVG…RVHT and ACCS…YLKI. Residues 228–366 are sufficient for interaction with DICER1; that stretch reads VPLDARDGNE…QYLKIMAGSK (139 aa).

Belongs to the TARBP2 family. Self-associates. Component of the RISC loading complex (RLC), or micro-RNA (miRNA) loading complex (miRLC), which is composed of DICER1, AGO2 and TARBP2. Note that the trimeric RLC/miRLC is also referred to as RISC. Interacts with EIF2AK2/PKR and inhibits its protein kinase activity. Interacts with DHX9 and PRKRA. Interacts with DICER1, AGO2, MOV10, EIF6 and RPL7A (60S ribosome subunit); they form a large RNA-induced silencing complex (RISC). Interacts with IRF7; this interaction prevents IRF7 phosphorylation and activation.

It is found in the cytoplasm. Its subcellular location is the perinuclear region. The protein localises to the nucleus. Required for formation of the RNA induced silencing complex (RISC). Component of the RISC loading complex (RLC), also known as the micro-RNA (miRNA) loading complex (miRLC), which is composed of DICER1, AGO2 and TARBP2. Within the RLC/miRLC, DICER1 and TARBP2 are required to process precursor miRNAs (pre-miRNAs) to mature miRNAs and then load them onto AGO2. AGO2 bound to the mature miRNA constitutes the minimal RISC and may subsequently dissociate from DICER1 and TARBP2. May also play a role in the production of short interfering RNAs (siRNAs) from double-stranded RNA (dsRNA) by DICER1. Binds in vitro to the PRM1 3'-UTR. Seems to act as a repressor of translation. For some pre-miRNA substrates, may also alter the choice of cleavage site by DICER1. Negatively regulates IRF7-mediated IFN-beta signaling triggered by viral infection by inhibiting the phosphorylation of IRF7 and promoting its 'Lys'-48-linked ubiquitination and degradation. This is RISC-loading complex subunit TARBP2 from Bos taurus (Bovine).